We begin with the raw amino-acid sequence, 819 residues long: Lon protease (819 aa).

A compositionally biased stretch (polar residues) spans 1–14; sequence MNSTNNTDSQNLDP. Positions 1–40 are disordered; sequence MNSTNNTDSQNLDPNASEVEKLLDESAEAEEKVDDHTPPS. The segment covering 18–38 has biased composition (basic and acidic residues); that stretch reads EVEKLLDESAEAEEKVDDHTP. The Lon N-terminal domain maps to 42–239; it reads LFILPLNKRP…KALVLLKKEL (198 aa). 392-399 is an ATP binding site; sequence GPPGVGKT. Residues 634 to 818 form the Lon proteolytic domain; it reads KTPVGVATGL…DDVFKIAFPG (185 aa). Active-site residues include Ser724 and Lys767.

Belongs to the peptidase S16 family. In terms of assembly, homohexamer. Organized in a ring with a central cavity.

It is found in the cytoplasm. It carries out the reaction Hydrolysis of proteins in presence of ATP.. ATP-dependent serine protease that mediates the selective degradation of mutant and abnormal proteins as well as certain short-lived regulatory proteins. Required for cellular homeostasis and for survival from DNA damage and developmental changes induced by stress. Degrades polypeptides processively to yield small peptide fragments that are 5 to 10 amino acids long. Binds to DNA in a double-stranded, site-specific manner. This chain is Lon protease, found in Chlamydia trachomatis serovar D (strain ATCC VR-885 / DSM 19411 / UW-3/Cx).